The sequence spans 238 residues: MRLDKYLSKSLHISRKEAKELIREGRVKVSGKVVKQAEYRVKEGEEVEVEGKSVKPKKNVYLMLYKPKGYLSTTEEDKKYPSFLELIREHFPSRKLFSAGRLDVDAEGLLLITDDGELAHRLTHPKWKVEKEYIVRLDRDIGDEELKKLYEVKLEEKPVQLVKAEKLSGDTVKAILTEGRHHVVKRLFKAVGHNVVYLKRTRVGNLRLDENMEPGEWRELTEEEVKELKRLVKYNPQN.

The 64-residue stretch at 1-64 (MRLDKYLSKS…KPKKNVYLML (64 aa)) folds into the S4 RNA-binding domain. Catalysis depends on aspartate 103, which acts as the Nucleophile.

This sequence belongs to the pseudouridine synthase RsuA family.

The enzyme catalyses a uridine in RNA = a pseudouridine in RNA. This is an uncharacterized protein from Aquifex aeolicus (strain VF5).